The chain runs to 420 residues: Glucose-1-phosphate adenylyltransferase (420 aa).

Residues tyrosine 107, glycine 172, 187–188 (EK), and serine 205 contribute to the alpha-D-glucose 1-phosphate site.

Belongs to the bacterial/plant glucose-1-phosphate adenylyltransferase family. In terms of assembly, homotetramer.

It catalyses the reaction alpha-D-glucose 1-phosphate + ATP + H(+) = ADP-alpha-D-glucose + diphosphate. It functions in the pathway glycan biosynthesis; glycogen biosynthesis. Its function is as follows. Involved in the biosynthesis of ADP-glucose, a building block required for the elongation reactions to produce glycogen. Catalyzes the reaction between ATP and alpha-D-glucose 1-phosphate (G1P) to produce pyrophosphate and ADP-Glc. This Rhodopseudomonas palustris (strain TIE-1) protein is Glucose-1-phosphate adenylyltransferase.